Reading from the N-terminus, the 293-residue chain is N-acetylneuraminate lyase (293 aa).

Serine 48 and serine 49 together coordinate aceneuramate. Catalysis depends on tyrosine 137, which acts as the Proton donor. Lysine 165 serves as the catalytic Schiff-base intermediate with substrate. Aceneuramate is bound by residues threonine 167, glycine 189, aspartate 191, glutamate 192, and serine 208.

This sequence belongs to the DapA family. NanA subfamily. Homotetramer.

Its subcellular location is the cytoplasm. It catalyses the reaction aceneuramate = aldehydo-N-acetyl-D-mannosamine + pyruvate. The protein operates within amino-sugar metabolism; N-acetylneuraminate degradation; D-fructose 6-phosphate from N-acetylneuraminate: step 1/5. Functionally, catalyzes the reversible aldol cleavage of N-acetylneuraminic acid (sialic acid; Neu5Ac) to form pyruvate and N-acetylmannosamine (ManNAc) via a Schiff base intermediate. The sequence is that of N-acetylneuraminate lyase from Staphylococcus aureus (strain bovine RF122 / ET3-1).